The chain runs to 545 residues: Chaperonin GroEL (545 aa).

ATP-binding positions include 30–33, Lys51, 87–91, Gly413, 477–479, and Asp493; these read TLGP, DGTTT, and NAA.

The protein belongs to the chaperonin (HSP60) family. Forms a cylinder of 14 subunits composed of two heptameric rings stacked back-to-back. Interacts with the co-chaperonin GroES.

The protein localises to the cytoplasm. The catalysed reaction is ATP + H2O + a folded polypeptide = ADP + phosphate + an unfolded polypeptide.. Its function is as follows. Together with its co-chaperonin GroES, plays an essential role in assisting protein folding. The GroEL-GroES system forms a nano-cage that allows encapsulation of the non-native substrate proteins and provides a physical environment optimized to promote and accelerate protein folding. This is Chaperonin GroEL from Pseudomonas putida (Arthrobacter siderocapsulatus).